A 350-amino-acid chain; its full sequence is m7GpppX diphosphatase (350 aa).

An N-acetylserine modification is found at Ser-2. At Ser-60 the chain carries Phosphoserine. Thr-66 carries the phosphothreonine modification. Thr-66 carries the post-translational modification Phosphothreonine; by YAK1. Tyr-70 is subject to Phosphotyrosine. Thr-120 is subject to Phosphothreonine. Residues Glu-171, Lys-196, and 259 to 270 (HYQPSYYHFHIH) contribute to the substrate site. The Histidine triad motif signature appears at 266-270 (HFHIH). His-268 serves as the catalytic Nucleophile.

It belongs to the HIT family. In terms of assembly, homodimer. Forms heterodimer with DCS2; the interaction inhibits the DCS1 scavenger decapping activity during post-diauxic growth. Post-translationally, phosphorylated. Phosphorylation occurs upon glucose deprivation.

It is found in the cytoplasm. It localises to the perinuclear region. The protein localises to the P-body. The catalysed reaction is a 5'-end (N(7)-methyl 5'-triphosphoguanosine)-ribonucleoside in mRNA + H2O = N(7)-methyl-GMP + a 5'-end diphospho-ribonucleoside in mRNA + 2 H(+). With respect to regulation, the hydrolytic product 7-methylguanosine diphosphate (m7GDP) efficiently inhibits the decapping scavenger activity and acts as a competitive inhibitor in vitro. In terms of biological role, decapping scavenger enzyme that catalyzes the cleavage of a residual cap structure following the degradation of mRNAs by the 3'-&gt;5' exosome-mediated mRNA decay pathway. Hydrolyzes cap analog structures like 7-methylguanosine nucleoside triphosphate (m7GpppG) and tri-methyl guanosine nucleoside triphosphate (m3(2,2,7)GpppG) with up to 10 nucleotide substrates (small capped oligoribonucleotides) and specifically releases 5'-phosphorylated RNA fragments and 7-methylguanosine monophosphate (m7GMP) or tri-methyl guanosine nucleoside monophosphate (m3(2,2,7)GMP), respectively. Does not hydrolyze unmethylated cap analog (GpppG) and shows no decapping activity on intact m7GpppG-capped mRNA molecules longer than 25 nucleotides. Does not hydrolyze 7-methylguanosine diphosphate (m7GDP) and tri-methylguanosine diphosphate (m3(2,2,7)GDP) to (m(7)GMP) and m3(2,2,7)GMP, respectively. May also play a role in the 5'-&gt;3 mRNA decay pathway; m7GDP, the downstream product released by the 5'-&gt;3' mRNA mediated decapping activity, may be also converted by DCS1 to m7GMP. Binds to m7GpppG and strongly to m7GDP. May also regulate the 5'-&gt;3' exoribonucleolytic mRNA decay pathway in a cap-independent manner. Negatively regulates trehalase activity. This chain is m7GpppX diphosphatase, found in Saccharomyces cerevisiae (strain ATCC 204508 / S288c) (Baker's yeast).